The chain runs to 548 residues: MAKFMTPVIQDNPSGWGPCAVPEQFRDMPYQPFSKGDRLGKVADWTGATYQDKRYTNKYSSQFGGGSQYAYFHEEDESSFQLVDTARTQKTAYQRNRMRFAQRNLRRDKDRRNMLQFNLQILPKSAKQKERERIRLQKKFQKQFGVRQKWDQKSQKPRDSSVEVRSDWEVKEEMDFPQLMKMRYLEVSEPQDIECCGALEYYDKAFDRITTRSEKPLRSIKRIFHTVTTTDDPVIRKLAKTQGNVFATDAILATLMSCTRSVYSWDIVVQRVGSKLFFDKRDNSDFDLPTVSETANEPPQDEGNSFNSPRNLAMEATYINHNFSQQCLRMGKERYNFPNPNPFVEDDMDKNEIASVAYRYRRWKLGDDIDLIVRCEHDGVMTGANGEVSFINIKTLNEWDSRHCNGVDWRQKLDSQRGAVIATELKNNSYKLARWTCCALLAGSEYLKLGYVSRYHVKDSSRHVILGTQQFKPNEFASQINLSVENAWGILRCVIDICMKLEEGKYLILKDPNKQVIRVYSLPDGTFSSDEDEEEEEEEEEEEEEEET.

N6-acetyllysine is present on Lys-53. Ser-161 is modified (phosphoserine). The segment at 285-299 is RNA gate; it reads DFDLPTVSETANEPP. Disordered regions lie at residues 288–309 and 523–548; these read LPTV…FNSP and PDGT…EEET. Polar residues predominate over residues 291-309; it reads VSETANEPPQDEGNSFNSP. Phosphoserine occurs at positions 528 and 529. Over residues 529–548 the composition is skewed to acidic residues; it reads SDEDEEEEEEEEEEEEEEET.

It belongs to the eIF-3 subunit D family. In terms of assembly, component of the eukaryotic translation initiation factor 3 (eIF-3) complex, which is composed of 13 subunits: EIF3A, EIF3B, EIF3C, EIF3D, EIF3E, EIF3F, EIF3G, EIF3H, EIF3I, EIF3J, EIF3K, EIF3L and EIF3M. The eIF-3 complex appears to include 3 stable modules: module A is composed of EIF3A, EIF3B, EIF3G and EIF3I; module B is composed of EIF3F, EIF3H, and EIF3M; and module C is composed of EIF3C, EIF3D, EIF3E, EIF3K and EIF3L. EIF3C of module C binds EIF3B of module A and EIF3H of module B, thereby linking the three modules. EIF3J is a labile subunit that binds to the eIF-3 complex via EIF3B. The eIF-3 complex interacts with RPS6KB1 under conditions of nutrient depletion. Mitogenic stimulation leads to binding and activation of a complex composed of MTOR and RPTOR, leading to phosphorylation and release of RPS6KB1 and binding of EIF4B to eIF-3.

It is found in the cytoplasm. Functionally, mRNA cap-binding component of the eukaryotic translation initiation factor 3 (eIF-3) complex, a complex required for several steps in the initiation of protein synthesis of a specialized repertoire of mRNAs. The eIF-3 complex associates with the 40S ribosome and facilitates the recruitment of eIF-1, eIF-1A, eIF-2:GTP:methionyl-tRNAi and eIF-5 to form the 43S pre-initiation complex (43S PIC). The eIF-3 complex stimulates mRNA recruitment to the 43S PIC and scanning of the mRNA for AUG recognition. The eIF-3 complex is also required for disassembly and recycling of post-termination ribosomal complexes and subsequently prevents premature joining of the 40S and 60S ribosomal subunits prior to initiation. The eIF-3 complex specifically targets and initiates translation of a subset of mRNAs involved in cell proliferation, including cell cycling, differentiation and apoptosis, and uses different modes of RNA stem-loop binding to exert either translational activation or repression. In the eIF-3 complex, EIF3D specifically recognizes and binds the 7-methylguanosine cap of a subset of mRNAs. This is Eukaryotic translation initiation factor 3 subunit D from Pongo abelii (Sumatran orangutan).